Here is a 708-residue protein sequence, read N- to C-terminus: DNA ligase (708 aa).

Residues D35 to D39, S84 to L85, and E118 contribute to the NAD(+) site. K120 serves as the catalytic N6-AMP-lysine intermediate. R141, E182, K303, and K327 together coordinate NAD(+). Zn(2+)-binding residues include C419, C422, C437, and C443. A BRCT domain is found at T628 to Q708.

Belongs to the NAD-dependent DNA ligase family. LigA subfamily. Requires Mg(2+) as cofactor. It depends on Mn(2+) as a cofactor.

The catalysed reaction is NAD(+) + (deoxyribonucleotide)n-3'-hydroxyl + 5'-phospho-(deoxyribonucleotide)m = (deoxyribonucleotide)n+m + AMP + beta-nicotinamide D-nucleotide.. Its function is as follows. DNA ligase that catalyzes the formation of phosphodiester linkages between 5'-phosphoryl and 3'-hydroxyl groups in double-stranded DNA using NAD as a coenzyme and as the energy source for the reaction. It is essential for DNA replication and repair of damaged DNA. This Rhizorhabdus wittichii (strain DSM 6014 / CCUG 31198 / JCM 15750 / NBRC 105917 / EY 4224 / RW1) (Sphingomonas wittichii) protein is DNA ligase.